The primary structure comprises 622 residues: Telomerase-associated protein of 75 kDa (622 aa).

In terms of assembly, component of the telomerase holoenzyme complex, composed of the catalytic core (the catalytic subunit TERT, the telomerase RNA template component TER and TAP65/p65), which is associated with two heterotrimeric subcomplexes: (i) the replication protein A (RPA)-related subcomplex, composed of TEB1, RPA2/TEB2 and RPA3/TEB3 and (ii) the CST-like subcomplex, composed of TAP75/p75, TAP45/p45 and TAP19/p19. TEB1 and the CST-like subcomplex are tethered to the catalytic core by TAP50/p50.

The protein resides in the chromosome. It is found in the telomere. Functionally, component of a CST-like subcomplex of the holoenzyme telomerase ribonucleoprotein complex, which stimulates telomerase complementary-strand synthesis. Telomerase is an essential ribonucleoprotein enzyme that copies new telomeric repeats onto chromosome ends by repetitively synthesizing the short telomere-repeat sequence 5'-TTGGGG-3' using an RNA template component TER. The CST-like subcomplex (also named 7-4-1) binds telomeric single-stranded DNA and coordinates telomere G-strand and C-strand synthesis. The protein is Telomerase-associated protein of 75 kDa of Tetrahymena thermophila (strain SB210).